A 349-amino-acid polypeptide reads, in one-letter code: tRNA pseudouridine synthase D (349 aa).

Position 26 (Phe26) interacts with substrate. The active-site Nucleophile is Asp79. Residue Asn128 coordinates substrate. Residues 154–302 (GVPNYFGSQR…VEGSRRAVLL (149 aa)) enclose the TRUD domain. Phe328 provides a ligand contact to substrate.

The protein belongs to the pseudouridine synthase TruD family.

The catalysed reaction is uridine(13) in tRNA = pseudouridine(13) in tRNA. Responsible for synthesis of pseudouridine from uracil-13 in transfer RNAs. This is tRNA pseudouridine synthase D from Yersinia pseudotuberculosis serotype O:1b (strain IP 31758).